A 621-amino-acid chain; its full sequence is Bifunctional 3'-phosphoadenosine 5'-phosphosulfate synthase 2 (621 aa).

The adenylyl-sulfate kinase stretch occupies residues 1–216 (MSANFKMNHK…VVELLQEQNI (216 aa)). 53–58 (GAGKTT) contacts ATP. Adenosine 5'-phosphosulfate-binding positions include 80–83 (DNVR), F92, 97–100 (REEN), 123–124 (IS), K162, and 175–176 (GF). Residues S198, 415 to 418 (QLRN), 517 to 521 (GRDPA), and A559 contribute to the ATP site. Residues 225 to 621 (IHELFVPENK…DYYRSLEKTN (397 aa)) are sulfate adenylyltransferase.

It in the N-terminal section; belongs to the APS kinase family. In the C-terminal section; belongs to the sulfate adenylyltransferase family. Expressed in liver, cartilage, skin and brain.

It catalyses the reaction sulfate + ATP + H(+) = adenosine 5'-phosphosulfate + diphosphate. It carries out the reaction adenosine 5'-phosphosulfate + ATP = 3'-phosphoadenylyl sulfate + ADP + H(+). It functions in the pathway sulfur metabolism; sulfate assimilation. Functionally, bifunctional enzyme with both ATP sulfurylase and APS kinase activity, which mediates two steps in the sulfate activation pathway. The first step is the transfer of a sulfate group to ATP to yield adenosine 5'-phosphosulfate (APS), and the second step is the transfer of a phosphate group from ATP to APS yielding 3'-phosphoadenylylsulfate/PAPS, the activated sulfate donor used by sulfotransferases. In mammals, PAPS is the sole source of sulfate while APS appears to only be an intermediate in the sulfate-activation pathway. May have an important role in skeletogenesis during postnatal growth. This chain is Bifunctional 3'-phosphoadenosine 5'-phosphosulfate synthase 2 (Papss2), found in Mus musculus (Mouse).